The following is a 278-amino-acid chain: Urease accessory protein UreD 3 (278 aa).

Belongs to the UreD family. As to quaternary structure, ureD, UreF and UreG form a complex that acts as a GTP-hydrolysis-dependent molecular chaperone, activating the urease apoprotein by helping to assemble the nickel containing metallocenter of UreC. The UreE protein probably delivers the nickel.

The protein localises to the cytoplasm. Functionally, required for maturation of urease via the functional incorporation of the urease nickel metallocenter. This is Urease accessory protein UreD 3 from Bradyrhizobium sp. (strain BTAi1 / ATCC BAA-1182).